We begin with the raw amino-acid sequence, 158 residues long: SsrA-binding protein (158 aa).

Belongs to the SmpB family.

It localises to the cytoplasm. Its function is as follows. Required for rescue of stalled ribosomes mediated by trans-translation. Binds to transfer-messenger RNA (tmRNA), required for stable association of tmRNA with ribosomes. tmRNA and SmpB together mimic tRNA shape, replacing the anticodon stem-loop with SmpB. tmRNA is encoded by the ssrA gene; the 2 termini fold to resemble tRNA(Ala) and it encodes a 'tag peptide', a short internal open reading frame. During trans-translation Ala-aminoacylated tmRNA acts like a tRNA, entering the A-site of stalled ribosomes, displacing the stalled mRNA. The ribosome then switches to translate the ORF on the tmRNA; the nascent peptide is terminated with the 'tag peptide' encoded by the tmRNA and targeted for degradation. The ribosome is freed to recommence translation, which seems to be the essential function of trans-translation. The chain is SsrA-binding protein from Roseiflexus castenholzii (strain DSM 13941 / HLO8).